A 608-amino-acid polypeptide reads, in one-letter code: Glutamine--fructose-6-phosphate aminotransferase [isomerizing] (608 aa).

Residue C2 is the Nucleophile; for GATase activity of the active site. In terms of domain architecture, Glutamine amidotransferase type-2 spans 2–217; the sequence is CGIVGYSGKK…DKEFVVLTSE (216 aa). SIS domains follow at residues 285–424 and 453–598; these read TKEQ…NKNT and KVQK…VDKP. K603 (for Fru-6P isomerization activity) is an active-site residue.

As to quaternary structure, homodimer.

The protein resides in the cytoplasm. The catalysed reaction is D-fructose 6-phosphate + L-glutamine = D-glucosamine 6-phosphate + L-glutamate. Functionally, catalyzes the first step in hexosamine metabolism, converting fructose-6P into glucosamine-6P using glutamine as a nitrogen source. The protein is Glutamine--fructose-6-phosphate aminotransferase [isomerizing] of Clostridium acetobutylicum (strain ATCC 824 / DSM 792 / JCM 1419 / IAM 19013 / LMG 5710 / NBRC 13948 / NRRL B-527 / VKM B-1787 / 2291 / W).